Reading from the N-terminus, the 256-residue chain is Glycerol-3-phosphate acyltransferase (256 aa).

The next 6 membrane-spanning stretches (helical) occupy residues 2–22, 58–78, 90–110, 123–143, 153–173, and 211–231; these read FPYL…SVLW, LAVA…AIGL, SYFI…WFKF, LIVV…IFAF, IIGT…GVMG, and FADG…ILVV.

It belongs to the PlsY family. Probably interacts with PlsX.

It is found in the cell membrane. It carries out the reaction an acyl phosphate + sn-glycerol 3-phosphate = a 1-acyl-sn-glycero-3-phosphate + phosphate. It functions in the pathway lipid metabolism; phospholipid metabolism. In terms of biological role, catalyzes the transfer of an acyl group from acyl-phosphate (acyl-PO(4)) to glycerol-3-phosphate (G3P) to form lysophosphatidic acid (LPA). This enzyme utilizes acyl-phosphate as fatty acyl donor, but not acyl-CoA or acyl-ACP. This is Glycerol-3-phosphate acyltransferase from Mesoplasma florum (strain ATCC 33453 / NBRC 100688 / NCTC 11704 / L1) (Acholeplasma florum).